The following is a 417-amino-acid chain: MLAFKSDFLHIMSERGFIHQISDEKGLDALFSKEVVSAYIGFDPTASSLHAGSLLQIMMLHWLQKTGHRPIALMGGGTGLIGDPSFKDEARPLLTQDDIATNIVSIKKVFANYLTFGEKETDACIINNAEWLCKLNYLEFLRDVGKHFSINRMLSFDSVRLRLEREHSLSFLEFNYMILQAYDFVELYKRYGLRMQMGGSDQWGNIINGIELGHRLGTPQLYAFTSPLLTTSSGAKMGKSLNGAVWLNADMLSPYQFWQYWRNTEDADVTRFLKLYTTLPMDEILKLSALQGTEINEAKKILATEITAMLHGRDLANTAAKTARKTFEEKTFGENLPTIEINASDLKTGAGLLALLVQAGLAKSNSEARRHIQGGGIRVNDQIIEDETCLILEEDINAQGIIKLSFGKKKHVLIKPL.

Residue Y39 coordinates L-tyrosine. Residues 44 to 53 (PTASSLHAGS) carry the 'HIGH' region motif. L-tyrosine-binding residues include Y176 and Q180. The 'KMSKS' region motif lies at 236–240 (KMGKS). Residue K239 participates in ATP binding. The region spanning 350–417 (AGLLALLVQA…KKKHVLIKPL (68 aa)) is the S4 RNA-binding domain.

It belongs to the class-I aminoacyl-tRNA synthetase family. TyrS type 1 subfamily. Homodimer.

Its subcellular location is the cytoplasm. The enzyme catalyses tRNA(Tyr) + L-tyrosine + ATP = L-tyrosyl-tRNA(Tyr) + AMP + diphosphate + H(+). In terms of biological role, catalyzes the attachment of tyrosine to tRNA(Tyr) in a two-step reaction: tyrosine is first activated by ATP to form Tyr-AMP and then transferred to the acceptor end of tRNA(Tyr). This chain is Tyrosine--tRNA ligase, found in Bartonella quintana (strain Toulouse) (Rochalimaea quintana).